We begin with the raw amino-acid sequence, 197 residues long: MTLKELQAAIEGILFVRGDEGVTLEELCDLLELSTDVVYAALEELRLSYTDEARGLRIEEVAHAFRLSTKPELAPYFKKLALSTLQSGLSQAALETLAIIAYRQPITRIEVDEVRGVKSEKAIQTLTSRLLIKEVGRAQGTGRPILYGTTPQFLDHFGLKSLKELPPLPEDIDESSIGEEADLFFQQMEQGSLFHEE.

The protein belongs to the ScpB family. In terms of assembly, homodimer. Homodimerization may be required to stabilize the binding of ScpA to the Smc head domains. Component of a cohesin-like complex composed of ScpA, ScpB and the Smc homodimer, in which ScpA and ScpB bind to the head domain of Smc. The presence of the three proteins is required for the association of the complex with DNA.

The protein localises to the cytoplasm. Participates in chromosomal partition during cell division. May act via the formation of a condensin-like complex containing Smc and ScpA that pull DNA away from mid-cell into both cell halves. The chain is Segregation and condensation protein B from Halalkalibacterium halodurans (strain ATCC BAA-125 / DSM 18197 / FERM 7344 / JCM 9153 / C-125) (Bacillus halodurans).